Here is a 317-residue protein sequence, read N- to C-terminus: Methionyl-tRNA formyltransferase (317 aa).

Serine 112–proline 115 provides a ligand contact to (6S)-5,6,7,8-tetrahydrofolate.

It belongs to the Fmt family.

It carries out the reaction L-methionyl-tRNA(fMet) + (6R)-10-formyltetrahydrofolate = N-formyl-L-methionyl-tRNA(fMet) + (6S)-5,6,7,8-tetrahydrofolate + H(+). Functionally, attaches a formyl group to the free amino group of methionyl-tRNA(fMet). The formyl group appears to play a dual role in the initiator identity of N-formylmethionyl-tRNA by promoting its recognition by IF2 and preventing the misappropriation of this tRNA by the elongation apparatus. The protein is Methionyl-tRNA formyltransferase of Mesorhizobium japonicum (strain LMG 29417 / CECT 9101 / MAFF 303099) (Mesorhizobium loti (strain MAFF 303099)).